Here is a 359-residue protein sequence, read N- to C-terminus: RNA-binding protein 4B (359 aa).

2 consecutive RRM domains span residues 2–72 (VKLF…ASKN) and 78–148 (TKLH…LSTS). The CCHC-type zinc finger occupies 160 to 177 (SGCYRCGKEGHWSKECPV). Residues 196–359 (AVRPPYTMGY…YVDRARYSAF (164 aa)) form an interaction with TNPO3 region.

As to quaternary structure, interacts with TNPO3, which may mediate nuclear import of the protein.

The protein resides in the nucleus. It is found in the nucleolus. Functionally, required for the translational activation of PER1 mRNA in response to circadian clock. Binds directly to the 3'-UTR of the PER1 mRNA. This Sus scrofa (Pig) protein is RNA-binding protein 4B (RBM4B).